The sequence spans 702 residues: Ribosomal RNA large subunit methyltransferase K/L (702 aa).

The 112-residue stretch at 43-154 (LVYQSLMWSR…KETASIALDL (112 aa)) folds into the THUMP domain.

This sequence belongs to the methyltransferase superfamily. RlmKL family.

It localises to the cytoplasm. The enzyme catalyses guanosine(2445) in 23S rRNA + S-adenosyl-L-methionine = N(2)-methylguanosine(2445) in 23S rRNA + S-adenosyl-L-homocysteine + H(+). The catalysed reaction is guanosine(2069) in 23S rRNA + S-adenosyl-L-methionine = N(2)-methylguanosine(2069) in 23S rRNA + S-adenosyl-L-homocysteine + H(+). Functionally, specifically methylates the guanine in position 2445 (m2G2445) and the guanine in position 2069 (m7G2069) of 23S rRNA. The chain is Ribosomal RNA large subunit methyltransferase K/L from Escherichia coli O1:K1 / APEC.